Reading from the N-terminus, the 452-residue chain is NADH-quinone oxidoreductase subunit N 2 (452 aa).

The next 14 helical transmembrane spans lie at 6–26, 33–53, 70–90, 97–117, 120–140, 154–174, 194–214, 232–252, 258–278, 286–306, 311–331, 355–375, 387–407, and 432–452; these read VLIPEISLLILAIISFFYGFI, TYILSFLSILTAIILSVFNFG, TLRILVLFIGVFIIGLSYSDL, SVEYVFLLLLSLFGMNLMIVA, LLILYLALETFSLSLYILAGF, YFILGTLSSIILLGSIVFFYA, ILLGVVFLISAFAFKLSLAPF, FLSTAPKVAVFGALINIFLSI, IQDLIVIISALSMLVGNVLAL, MLAYSSIAHAGYMFMAFLLPE, ISLIPYLIVYVFMNLSAFAFI, FCIIVIMFSLTGVPPTAGFIV, GYGSLVFFALLMSIFSAFYYL, and ALSGALLLIFLGLFPNLLLIF.

It belongs to the complex I subunit 2 family. NDH-1 is composed of 14 different subunits. Subunits NuoA, H, J, K, L, M, N constitute the membrane sector of the complex.

The protein resides in the cell inner membrane. It catalyses the reaction a quinone + NADH + 5 H(+)(in) = a quinol + NAD(+) + 4 H(+)(out). Its function is as follows. NDH-1 shuttles electrons from NADH, via FMN and iron-sulfur (Fe-S) centers, to quinones in the respiratory chain. The immediate electron acceptor for the enzyme in this species is believed to be ubiquinone. Couples the redox reaction to proton translocation (for every two electrons transferred, four hydrogen ions are translocated across the cytoplasmic membrane), and thus conserves the redox energy in a proton gradient. This is NADH-quinone oxidoreductase subunit N 2 from Thermodesulfovibrio yellowstonii (strain ATCC 51303 / DSM 11347 / YP87).